A 284-amino-acid chain; its full sequence is uncharacterized protein (284 aa).

Positions 25 to 123 (PILVMHGGHS…NTLTLQSAVT (99 aa)) constitute an AB hydrolase-1 domain. Residue Ser-96 is part of the active site.

Belongs to the AB hydrolase superfamily.

This is an uncharacterized protein from Bacillus subtilis (strain 168).